Reading from the N-terminus, the 233-residue chain is Modulator of macroautophagy TMEM150B (233 aa).

The Cytoplasmic segment spans residues M1–L7. Residues M8 to V28 form a helical membrane-spanning segment. At T29–Q51 the chain is on the extracellular side. An N-linked (GlcNAc...) asparagine glycan is attached at N30. Residues S52–V72 form a helical membrane-spanning segment. Over R73–R84 the chain is Cytoplasmic. A helical transmembrane segment spans residues W85–G105. Residues N106–H116 lie on the Extracellular side of the membrane. The chain crosses the membrane as a helical span at residues L117 to L137. The Cytoplasmic segment spans residues W138–R155. A helical membrane pass occupies residues L156–S176. The Extracellular segment spans residues L177–E185. The helical transmembrane segment at W186 to L206 threads the bilayer. At E207 to L233 the chain is on the cytoplasmic side.

The protein belongs to the DRAM/TMEM150 family. As to expression, highly expressed in the colon and lung with comparatively high levels also detectable in the lymph nodes, placenta, duodenum, peripheral blood mononuclear cells and spleen.

It localises to the cell membrane. It is found in the endosome membrane. The protein localises to the cytoplasmic vesicle. Its subcellular location is the autophagosome membrane. Functionally, modulator of macroautophagy that causes accumulation of autophagosomes under basal conditions and enhances autophagic flux. Represses cell death and promotes long-term clonogenic survival of cells grown in the absence of glucose in a macroautophagy-independent manner. May have some role in extracellular matrix engulfment or growth factor receptor recycling, both of which can modulate cell survival. The chain is Modulator of macroautophagy TMEM150B from Homo sapiens (Human).